A 424-amino-acid polypeptide reads, in one-letter code: Neurotensin receptor type 1 (424 aa).

The disordered stretch occupies residues 1–23 (MHLNSSVPQGTPGEPDAQPFSGP). Residues 1–68 (MHLNSSVPQG…TDIYSKVLVT (68 aa)) lie on the Extracellular side of the membrane. N-linked (GlcNAc...) asparagine glycosylation is found at asparagine 4, asparagine 38, and asparagine 42. Residues 69–89 (AIYLALFVVGTVGNSVTAFTL) form a helical membrane-spanning segment. The Cytoplasmic portion of the chain corresponds to 90 to 103 (ARKKSLQSLQSTVH). Residues 104 to 123 (YHLGSLALSDLLILLLAMPV) form a helical membrane-spanning segment. The Extracellular segment spans residues 124 to 143 (ELYNFIWVHHPWAFGDAGCR). The cysteines at positions 142 and 225 are disulfide-linked. Residues 144-165 (GYYFLRDACTYATALNVASLSV) traverse the membrane as a helical segment. Residues 166–185 (ERYLAICHPFKAKTLMSRSR) are Cytoplasmic-facing. The helical transmembrane segment at 186–206 (TKKFISAIWLASALLAIPMLF) threads the bilayer. Residues 207–235 (TMGLQNRSGDGTHPGGLVCTPIVDTATVK) are Extracellular-facing. The chain crosses the membrane as a helical span at residues 236-260 (VVIQVNTFMSFLFPMLVISILNTVI). The Cytoplasmic segment spans residues 261-308 (ANKLTVMVHQAAEQGRVCTVGTHNGLEHSTFNMTIEPGRVQALRHGVL). The helical transmembrane segment at 309–330 (VLRAVVIAFVVCWLPYHVRRLM) threads the bilayer. Positions 326 to 349 (VRRLMFCYISDEQWTTFLFDFYHY) are neurotensin binding. Over 331–348 (FCYISDEQWTTFLFDFYH) the chain is Extracellular. A helical membrane pass occupies residues 349–369 (YFYMLTNALFYVSSAINPILY). The Cytoplasmic portion of the chain corresponds to 370 to 424 (NLVSANFRQVFLSTLACLCPGWRHRRKKRPTFSRKPNSMSSNHAFSTSATRETLY). S-palmitoyl cysteine attachment occurs at residues cysteine 386 and cysteine 388. The interval 397-424 (KRPTFSRKPNSMSSNHAFSTSATRETLY) is disordered. Positions 403–424 (RKPNSMSSNHAFSTSATRETLY) are enriched in polar residues.

It belongs to the G-protein coupled receptor 1 family. Neurotensin receptor subfamily. NTSR1 sub-subfamily. In terms of assembly, interacts (palmitoylated form) with GNA11. In terms of processing, N-glycosylated. Post-translationally, palmitoylated; this is required for normal localization at membrane rafts and normal GNA11-mediated activation of down-stream signaling cascades. The palmitoylation level increases in response to neurotensin treatment. In terms of tissue distribution, detected in brain and small intestine.

Its subcellular location is the cell membrane. It is found in the membrane raft. Functionally, G-protein coupled receptor for the tridecapeptide neurotensin (NTS). Signaling is effected via G proteins that activate a phosphatidylinositol-calcium second messenger system. Signaling leads to the activation of downstream MAP kinases and protects cells against apoptosis. The protein is Neurotensin receptor type 1 (Ntsr1) of Rattus norvegicus (Rat).